The primary structure comprises 179 residues: MARLQQHYREKIAKDLTEKFGYKSPMQVPRLTKITLNMGVGEAVADKKVLDNAVADLTKIAGQKPVVTKSKKAIAGFKIRENQPIGCMVTLRGVQMYEFLDRFVTIALPRVRDFRGISGRAFDGRGNYNIGVKEQIIFPEIEYDKVDALRGLNISITTTAKTDEEAKALLAGFRFPFKN.

It belongs to the universal ribosomal protein uL5 family. Part of the 50S ribosomal subunit; part of the 5S rRNA/L5/L18/L25 subcomplex. Contacts the 5S rRNA and the P site tRNA. Forms a bridge to the 30S subunit in the 70S ribosome.

This is one of the proteins that bind and probably mediate the attachment of the 5S RNA into the large ribosomal subunit, where it forms part of the central protuberance. In the 70S ribosome it contacts protein S13 of the 30S subunit (bridge B1b), connecting the 2 subunits; this bridge is implicated in subunit movement. Contacts the P site tRNA; the 5S rRNA and some of its associated proteins might help stabilize positioning of ribosome-bound tRNAs. This chain is Large ribosomal subunit protein uL5, found in Variovorax paradoxus (strain S110).